Consider the following 407-residue polypeptide: Accessory Sec system protein translocase subunit SecY2 (407 aa).

10 helical membrane passes run 22–42 (IAFT…TIVD), 68–88 (LNVF…ISLI), 108–128 (EKFL…NQFV), 136–156 (FTEL…MWLA), 169–189 (PIVL…IVSI), 191–211 (ILML…LLLT), 245–265 (ISIM…NLIF), 280–300 (FGHY…GYLL), 343–363 (WFGT…SLLV), and 366–386 (LSEY…AMNI).

The protein belongs to the SecY/SEC61-alpha family. SecY2 subfamily. In terms of assembly, component of the accessory SecA2/SecY2 protein translocase complex required to export cell wall proteins. May form heterotrimers with SecE and SecG subunits.

It is found in the cell membrane. In terms of biological role, part of the accessory SecA2/SecY2 system specifically required for export of possible cell wall proteins. The central subunit of a protein translocation channel. The protein is Accessory Sec system protein translocase subunit SecY2 of Staphylococcus pseudintermedius (strain ED99).